An 801-amino-acid chain; its full sequence is Elongation factor G, mitochondrial (801 aa).

The N-terminal 62 residues, 1-62 (MRTPTLARLP…LSKHFQQRRN (62 aa)), are a transit peptide targeting the mitochondrion. One can recognise a tr-type G domain in the interval 99–386 (SRVRNIGIAA…GVIDYLPNPS (288 aa)). GTP is bound by residues 108 to 115 (AHIDSGKT), 184 to 188 (DTPGH), and 238 to 241 (NKMD).

The protein belongs to the TRAFAC class translation factor GTPase superfamily. Classic translation factor GTPase family. EF-G/EF-2 subfamily.

It is found in the mitochondrion. It functions in the pathway protein biosynthesis; polypeptide chain elongation. Its function is as follows. Mitochondrial GTPase that catalyzes the GTP-dependent ribosomal translocation step during translation elongation. During this step, the ribosome changes from the pre-translocational (PRE) to the post-translocational (POST) state as the newly formed A-site-bound peptidyl-tRNA and P-site-bound deacylated tRNA move to the P and E sites, respectively. Catalyzes the coordinated movement of the two tRNA molecules, the mRNA and conformational changes in the ribosome. The sequence is that of Elongation factor G, mitochondrial (mef1) from Aspergillus niger (strain ATCC MYA-4892 / CBS 513.88 / FGSC A1513).